The primary structure comprises 150 residues: Large ribosomal subunit protein bL9 (150 aa).

Belongs to the bacterial ribosomal protein bL9 family.

Binds to the 23S rRNA. The chain is Large ribosomal subunit protein bL9 from Hydrogenovibrio crunogenus (strain DSM 25203 / XCL-2) (Thiomicrospira crunogena).